Reading from the N-terminus, the 286-residue chain is Alpha-ketoglutarate-dependent dioxygenase alkB homolog 3 (286 aa).

The segment at 1–38 (MEDKRRRARVQGAWAGPAKSQATAQPAPTAENNLQQRP) is disordered. Positions 20–36 (SQATAQPAPTAENNLQQ) are enriched in polar residues. Substrate-binding positions include tryptophan 115 and 141–143 (YTY). Residues 172–278 (SFNSLLCNLY…RINLTFRTVY (107 aa)) enclose the Fe2OG dioxygenase domain. Leucine 177 is modified ((4R)-5-hydroxyleucine; alternate). Position 177 is a (4R)-5-oxoleucine; alternate (leucine 177). Residue 179–181 (NLY) participates in 2-oxoglutarate binding. Histidine 191 and aspartate 193 together coordinate Fe cation. A substrate-binding site is contributed by aspartate 194. Residue histidine 257 coordinates Fe cation. Residues 269-275 (RINLTFR) and arginine 275 contribute to the 2-oxoglutarate site.

Belongs to the alkB family. In terms of assembly, interacts with the ASCC complex composed of ASCC1, ASCC2 and ASCC3. Interacts directly with ASCC3, and is thereby recruited to the ASCC complex. Interacts with OTUD4; the interaction is direct. Interacts with USP7 and USP9X. Requires Fe(2+) as cofactor. Ubiquitinated; undergoes 'Lys-48'-linked polyubiquitination. OTUD4 promotes USP7 and USP9X-dependent deubiquitination of 'Lys-48'-polyubiquitinated ALKBH3 promoting the repair of alkylated DNA lesions.

The protein localises to the nucleus. It is found in the cytoplasm. The catalysed reaction is an N(1)-methyladenosine in mRNA + 2-oxoglutarate + O2 = an adenosine in mRNA + formaldehyde + succinate + CO2. It catalyses the reaction a methylated nucleobase within DNA + 2-oxoglutarate + O2 = a nucleobase within DNA + formaldehyde + succinate + CO2. The enzyme catalyses an N(1)-methyl-2'-deoxyadenosine in single-stranded DNA + 2-oxoglutarate + O2 = a 2'-deoxyadenosine in single-stranded DNA + formaldehyde + succinate + CO2 + H(+). It carries out the reaction an N(3)-methyl-2'-deoxycytidine in single-stranded DNA + 2-oxoglutarate + O2 = a 2'-deoxycytidine in single-stranded DNA + formaldehyde + succinate + CO2 + H(+). The catalysed reaction is a 3,N(4)-etheno-2'-deoxycytidine in single-stranded DNA + 2-oxoglutarate + O2 + H2O = a 2'-deoxycytidine in single-stranded DNA + glyoxal + succinate + CO2. Its activity is regulated as follows. Activated by ascorbate. Functionally, dioxygenase that mediates demethylation of DNA and RNA containing 1-methyladenosine (m1A). Repairs alkylated DNA containing 1-methyladenosine (m1A) and 3-methylcytosine (m3C) by oxidative demethylation. Has a strong preference for single-stranded DNA. Able to process alkylated m3C within double-stranded regions via its interaction with ASCC3, which promotes DNA unwinding to generate single-stranded substrate needed for ALKBH3. Can repair exocyclic 3,N4-ethenocytosine adducs in single-stranded DNA. Also acts on RNA. Demethylates N(1)-methyladenosine (m1A) RNA, an epigenetic internal modification of messenger RNAs (mRNAs) highly enriched within 5'-untranslated regions (UTRs) and in the vicinity of start codons. Requires molecular oxygen, alpha-ketoglutarate and iron. The sequence is that of Alpha-ketoglutarate-dependent dioxygenase alkB homolog 3 from Bos taurus (Bovine).